Reading from the N-terminus, the 202-residue chain is Snake venom metalloproteinase atroxlysin-1 (202 aa).

Positions R6–R202 constitute a Peptidase M12B domain. D9 and D93 together coordinate Ca(2+). Cystine bridges form between C117–C197, C157–C181, and C159–C164. Residue H142 participates in Zn(2+) binding. The active site involves E143. Residues H146 and H152 each coordinate Zn(2+). Residues C197 and N200 each contribute to the Ca(2+) site.

This sequence belongs to the venom metalloproteinase (M12B) family. P-I subfamily. In terms of assembly, monomer. The cofactor is Zn(2+). As to expression, expressed by the venom gland.

The protein resides in the secreted. Inhibited by EDTA, DTT and high concentrations of zinc ions (&gt;2 mM). Weakly inhibited by TLCK. Not inhibited by PMSF. Activated by calcium ions. Its function is as follows. Snake venom zinc metalloproteinase that acts on fibrinogen, fibrin, fibronectin (FN1), type I collagen, type IV collagen, integrin alpha-7/beta-1 (ITGA7/ITGB1) and integrin alpha-1/beta-1 (ITGA1/ITGB1). Binds to fibronectin (FN1), fibrinogen and, weakly, to type I collagen and laminin. Cleaves Xaa-Leu bonds. Inhibits ADP- and collagen-induced platelet aggregation both in the presence (IC(50)=1.4 uM for collagen) and in the absence (IC(50)=2.2 uM for collagen) of cofactors. Has hemorrhagic activity. In Bothrops atrox (Barba amarilla), this protein is Snake venom metalloproteinase atroxlysin-1.